The sequence spans 98 residues: Integration host factor subunit alpha (98 aa).

The tract at residues 49–71 is disordered; it reads FGNFDLRDKNQRPGRNPKTGEDI.

The protein belongs to the bacterial histone-like protein family. Heterodimer of an alpha and a beta chain.

In terms of biological role, this protein is one of the two subunits of integration host factor, a specific DNA-binding protein that functions in genetic recombination as well as in transcriptional and translational control. The chain is Integration host factor subunit alpha from Shewanella sp. (strain MR-4).